The following is a 480-amino-acid chain: Gasdermin-C2 (480 aa).

The segment at 1–226 (MGYSFDRASK…TCVILPSATK (226 aa)) is triggers pyroptosis.

It belongs to the gasdermin family. Homooligomer; homooligomeric ring-shaped pore complex containing 27-28 subunits when inserted in the membrane. Post-translationally, cleavage by CASP8 relieves autoinhibition by releasing the N-terminal moiety (Gasdermin-C2, N-terminal) that initiates pyroptosis. Palmitoylated.

The protein localises to the cytoplasm. It localises to the cytosol. Its subcellular location is the cell membrane. With respect to regulation, the full-length protein before cleavage is inactive: intramolecular interactions between N- and C-terminal domains mediate autoinhibition in the absence of activation signal. The intrinsic pyroptosis-inducing activity is carried by the released N-terminal moiety (Gasdermin-C2, N-terminal) following cleavage by caspase CASP8 in response to type-2 immunity following worm infection. In terms of biological role, this form constitutes the precursor of the pore-forming protein: upon cleavage, the released N-terminal moiety (Gasdermin-C2, N-terminal) binds to membranes and forms pores, triggering pyroptosis. Functionally, pore-forming protein that causes membrane permeabilization and pyroptosis in response to type-2 immunity. Produced by the cleavage of gasdermin-C2 in response to type-2 immunity following worm infection. After cleavage, moves to the plasma membrane where it strongly binds to membrane inner leaflet lipids. Homooligomerizes within the membrane and forms pores of 10-15 nanometers (nm) of inner diameter, triggering pyroptosis and lytic cell death in enterocytes. The chain is Gasdermin-C2 from Mus musculus (Mouse).